We begin with the raw amino-acid sequence, 514 residues long: 2,3-bisphosphoglycerate-independent phosphoglycerate mutase (514 aa).

Mn(2+)-binding residues include aspartate 14 and serine 64. Residue serine 64 is the Phosphoserine intermediate of the active site. Residues histidine 125, 155-156, arginine 187, arginine 193, 263-266, and lysine 336 contribute to the substrate site; these read RD and RADR. Residues aspartate 403, histidine 407, aspartate 444, histidine 445, and histidine 463 each coordinate Mn(2+).

Belongs to the BPG-independent phosphoglycerate mutase family. Monomer. Mn(2+) is required as a cofactor.

The catalysed reaction is (2R)-2-phosphoglycerate = (2R)-3-phosphoglycerate. It participates in carbohydrate degradation; glycolysis; pyruvate from D-glyceraldehyde 3-phosphate: step 3/5. Functionally, catalyzes the interconversion of 2-phosphoglycerate and 3-phosphoglycerate. This is 2,3-bisphosphoglycerate-independent phosphoglycerate mutase from Enterobacter sp. (strain 638).